The chain runs to 450 residues: Phosphoglucosamine mutase (450 aa).

Catalysis depends on S101, which acts as the Phosphoserine intermediate. Mg(2+) is bound by residues S101, D241, D243, and D245. S101 carries the post-translational modification Phosphoserine.

Belongs to the phosphohexose mutase family. It depends on Mg(2+) as a cofactor. Post-translationally, activated by phosphorylation.

The catalysed reaction is alpha-D-glucosamine 1-phosphate = D-glucosamine 6-phosphate. Functionally, catalyzes the conversion of glucosamine-6-phosphate to glucosamine-1-phosphate. The sequence is that of Phosphoglucosamine mutase from Listeria welshimeri serovar 6b (strain ATCC 35897 / DSM 20650 / CCUG 15529 / CIP 8149 / NCTC 11857 / SLCC 5334 / V8).